Here is a 127-residue protein sequence, read N- to C-terminus: Small ribosomal subunit protein uS11 (127 aa).

The protein belongs to the universal ribosomal protein uS11 family. In terms of assembly, part of the 30S ribosomal subunit. Interacts with proteins S7 and S18. Binds to IF-3.

Functionally, located on the platform of the 30S subunit, it bridges several disparate RNA helices of the 16S rRNA. Forms part of the Shine-Dalgarno cleft in the 70S ribosome. The protein is Small ribosomal subunit protein uS11 of Chlorobaculum parvum (strain DSM 263 / NCIMB 8327) (Chlorobium vibrioforme subsp. thiosulfatophilum).